The following is a 299-amino-acid chain: Tetrahydromethanopterin S-methyltransferase subunit E (299 aa).

6 helical membrane-spanning segments follow: residues 57-79 (AISG…AWAL), 95-115 (GVAA…RTVG), 133-153 (IGPI…AAYL), 158-178 (LGNP…VGAI), 237-257 (GLCF…GNII), and 262-282 (VTKT…AAGI).

It belongs to the MtrE family. In terms of assembly, the complex is composed of 8 subunits; MtrA, MtrB, MtrC, MtrD, MtrE, MtrF, MtrG and MtrH.

The protein resides in the cell membrane. It catalyses the reaction 5-methyl-5,6,7,8-tetrahydromethanopterin + coenzyme M + 2 Na(+)(in) = 5,6,7,8-tetrahydromethanopterin + methyl-coenzyme M + 2 Na(+)(out). It functions in the pathway one-carbon metabolism; methanogenesis from CO(2); methyl-coenzyme M from 5,10-methylene-5,6,7,8-tetrahydromethanopterin: step 2/2. Its function is as follows. Part of a complex that catalyzes the formation of methyl-coenzyme M and tetrahydromethanopterin from coenzyme M and methyl-tetrahydromethanopterin. This is an energy-conserving, sodium-ion translocating step. The chain is Tetrahydromethanopterin S-methyltransferase subunit E from Methanococcus maripaludis (strain C5 / ATCC BAA-1333).